We begin with the raw amino-acid sequence, 418 residues long: Gamma-glutamyl phosphate reductase (418 aa).

Belongs to the gamma-glutamyl phosphate reductase family.

The protein resides in the cytoplasm. The enzyme catalyses L-glutamate 5-semialdehyde + phosphate + NADP(+) = L-glutamyl 5-phosphate + NADPH + H(+). The protein operates within amino-acid biosynthesis; L-proline biosynthesis; L-glutamate 5-semialdehyde from L-glutamate: step 2/2. Catalyzes the NADPH-dependent reduction of L-glutamate 5-phosphate into L-glutamate 5-semialdehyde and phosphate. The product spontaneously undergoes cyclization to form 1-pyrroline-5-carboxylate. The protein is Gamma-glutamyl phosphate reductase of Desulfosudis oleivorans (strain DSM 6200 / JCM 39069 / Hxd3) (Desulfococcus oleovorans).